Consider the following 75-residue polypeptide: Iota-conotoxin-like R11.3 (75 aa).

A signal peptide spans 1–19; that stretch reads MKLCLTFLLVLMILASVTG. Residues 20 to 34 constitute a propeptide that is removed on maturation; it reads EKLSEQTLRRAARKN. 4 disulfide bridges follow: C39/C53, C46/C58, C52/C63, and C57/C70.

It belongs to the conotoxin I1 superfamily. In terms of tissue distribution, expressed by the venom duct.

It is found in the secreted. In terms of biological role, iota-conotoxins bind to voltage-gated sodium channels (Nav) and act as agonists by shifting the voltage-dependence of activation to more hyperpolarized levels. Produces general excitatory symptoms. This Conus radiatus (Rayed cone) protein is Iota-conotoxin-like R11.3.